The chain runs to 317 residues: MAKKVGVLLFIDLQPLPDSVEQWVKKTYHAELSGGATLQIVFNTQEACKLDVGTSVEAVVSLMHTPGRHSPSFLAEVARVLNPGGSFLVLEPLLVETQEQKYSSTQTNAGLERNLLLAGFVNSEVDFVTGVEIAKACTTSSVALNLVAVKSKKPSWDSASVFQLRKGSSQKGRARTNGNHQPVKFTAGDVMDDVLSMSKSVVKLDLTSNFKDDDEELIDEDDLLTEEDLKAPEIPKAESCAPTKKACKNCTCGRAELEEKEEETKLTAAQINNPTSSCGSCGLGDAFRCAGCPYRGMPTFKLGEKITLGESWLVADA.

The interval 1 to 162 (MAKKVGVLLF…KPSWDSASVF (162 aa)) is N-terminal SAM-like domain. Residues 163–229 (QLRKGSSQKG…EDDLLTEEDL (67 aa)) form a linker region. The [2Fe-2S] cluster site is built by Cys240, Cys247, Cys250, and Cys252. Residues 240-252 (CAPTKKACKNCTC) are fe-S binding site A. Positions 278, 281, 289, and 292 each coordinate [4Fe-4S] cluster. 2 short sequence motifs (cx2C motif) span residues 278–281 (CGSC) and 289–292 (CAGC). Residues 278-292 (CGSCGLGDAFRCAGC) are fe-S binding site B.

Belongs to the anamorsin family. As to quaternary structure, monomer. [2Fe-2S] cluster serves as cofactor. The cofactor is [4Fe-4S] cluster.

It is found in the cytoplasm. The protein resides in the mitochondrion intermembrane space. In terms of biological role, component of the cytosolic iron-sulfur (Fe-S) protein assembly (CIA) machinery. Required for the maturation of extramitochondrial Fe-S proteins. Part of an electron transfer chain functioning in an early step of cytosolic Fe-S biogenesis, facilitating the de novo assembly of a [4Fe-4S] cluster on the cytosolic Fe-S scaffold complex. Electrons are transferred from NADPH via a FAD- and FMN-containing diflavin oxidoreductase. Together with the diflavin oxidoreductase, also required for the assembly of the diferric tyrosyl radical cofactor of ribonucleotide reductase (RNR), probably by providing electrons for reduction during radical cofactor maturation in the catalytic small subunit. The chain is Anamorsin homolog 2 from Physcomitrium patens (Spreading-leaved earth moss).